The chain runs to 397 residues: Small ribosomal subunit protein mS29 (397 aa).

Residues 1-17 (MLKGMTRLVSRVHKLDP) constitute a mitochondrion transit peptide. N6-acetyllysine is present on residues Lys-174 and Lys-206.

Belongs to the mitochondrion-specific ribosomal protein mS29 family. In terms of assembly, component of the mitochondrial ribosome small subunit (28S) which comprises a 12S rRNA and about 30 distinct proteins. Interacts with DELE1. Interacts with NOA1.

Its subcellular location is the mitochondrion. The catalysed reaction is GTP + H2O = GDP + phosphate + H(+). In terms of biological role, as a component of the mitochondrial small ribosomal subunit, it plays a role in the translation of mitochondrial mRNAs. Involved in mediating interferon-gamma-induced cell death. Displays GTPase activity in vitro. In Bos taurus (Bovine), this protein is Small ribosomal subunit protein mS29.